A 124-amino-acid chain; its full sequence is Fluoride-specific ion channel FluC 2 (124 aa).

4 helical membrane-spanning segments follow: residues 9–29, 34–54, 67–87, and 99–119; these read LGIF…STWL, DFPW…IFLV, LILA…SLML, and FSLV…AYFL. Na(+)-binding residues include Gly77 and Thr80.

Belongs to the fluoride channel Fluc/FEX (TC 1.A.43) family.

The protein resides in the cell membrane. It carries out the reaction fluoride(in) = fluoride(out). Na(+) is not transported, but it plays an essential structural role and its presence is essential for fluoride channel function. Functionally, fluoride-specific ion channel. Important for reducing fluoride concentration in the cell, thus reducing its toxicity. This chain is Fluoride-specific ion channel FluC 2, found in Streptococcus pneumoniae (strain ATCC BAA-255 / R6).